The chain runs to 307 residues: Aquaporin Lacbi1:387054 (307 aa).

Residues 1 to 40 lie on the Cytoplasmic side of the membrane; that stretch reads MSNAPLVHLSDLQKRLRVFAVWEKVRNDGKVHWAIECFAE. Residues 41 to 61 traverse the membrane as a helical segment; it reads MFGVFLYVYFGLGSTAGWVIG. Over 62–68 the chain is Extracellular; that stretch reads NIIKETN. The chain crosses the membrane as a helical span at residues 69-89; sequence LSSILQIGLAYAFGIWFAIGL. Residues 90-120 lie on the Cytoplasmic side of the membrane; it reads CSSSSGGHFNPCVTLSFVVFKGFPKLKACRY. Residues 99 to 101 carry the NPA 1 motif; that stretch reads NPC. A helical membrane pass occupies residues 121–141; it reads IIAQILGAYIASALVYSQWNV. The Extracellular portion of the chain corresponds to 142–157; sequence LIEECTLGLIKAKAYD. A helical transmembrane segment spans residues 158–178; that stretch reads TTMFTPNGPAGIFALYLVPGA. The short motif at 167 to 169 is the NPA 2 element; that stretch reads AGI. At 179-183 the chain is on the cytoplasmic side; sequence QSVPR. Residues 184–203 traverse the membrane as a helical segment; it reads ALLNEFVNSTLIGMIIWAAL. At 204–216 the chain is on the extracellular side; it reads DPTNMMVPPAMGP. The chain crosses the membrane as a helical span at residues 217-237; that stretch reads LFISLAYAAVIWGFATPAVAL. Topologically, residues 238-264 are cytoplasmic; that stretch reads NTARDLGARLFAMSIWGTKAAGSGYSA. A helical transmembrane segment spans residues 265–285; that stretch reads IACLINIPATLLGVFLYEVFF. The Extracellular portion of the chain corresponds to 286 to 307; it reads TDSDRGKLLPILNGKKLKHIFS.

The protein belongs to the MIP/aquaporin (TC 1.A.8) family.

The protein resides in the membrane. It catalyses the reaction H2O(in) = H2O(out). It carries out the reaction NH4(+)(in) = NH4(+)(out). The enzyme catalyses urea(in) = urea(out). The catalysed reaction is glycerol(in) = glycerol(out). Water channel required to facilitate the transport of water across membranes. In addition to water, also shows strong ammonium transport activity. Also enables low but statistically significant glycerol and urea permeability. May be involved in fungal nitrogen (ammonium) support of the plant host in symbiosis. The protein is Aquaporin Lacbi1:387054 of Laccaria bicolor (strain S238N-H82 / ATCC MYA-4686) (Bicoloured deceiver).